The chain runs to 396 residues: MAKEKFDRSKSHANIGTIGHVDHGKTTLTAAITTVLHKKSGKGTAMAYDQIDGAPEERERGITISTAHVEYETETRHYAHVDCPGHADYVKNMITGAAQMDGAILVVSAADGPMPQTREHILLSKNVGVPYIVVFLNKCDMVDDEELLELVEMEVRDLLSEYDFPGDDVPVVKGSALKALEGDAEWEAKIFELMDAVDEYIPTPERDTEKPFMMPVEDVFSITGRGTVATGRVERGQVKVGDEVEIIGLQEENKKTTVTGVEMFRKLLDYAEAGDNIGALLRGVSREEIQRGQVLAKPGTITPHSKFKAEVYVLSKEEGGRHTPFFSNYRPQFYFRTTDVTGIIHLPEGVEMVMPGDNTEMNVELISTIAIEEGTRFSIREGGRTVGSGVVSTITE.

One can recognise a tr-type G domain in the interval Lys-10 to Glu-205. The interval Gly-19–Thr-26 is G1. Gly-19 to Thr-26 provides a ligand contact to GTP. Residue Thr-26 participates in Mg(2+) binding. The G2 stretch occupies residues Gly-61 to Ser-65. The interval Asp-82–Gly-85 is G3. Residues Asp-82–His-86 and Asn-137–Asp-140 contribute to the GTP site. Residues Asn-137–Asp-140 are G4. Residues Ser-175–Leu-177 form a G5 region. Phosphothreonine is present on Thr-385.

The protein belongs to the TRAFAC class translation factor GTPase superfamily. Classic translation factor GTPase family. EF-Tu/EF-1A subfamily. As to quaternary structure, monomer. Interacts with BrxC. Phosphorylated on Thr-385 in vitro by PrkC in the presence of poly-L-lysine or myelin basic protein, dephosphorylated by PrpC.

Its subcellular location is the cytoplasm. It carries out the reaction GTP + H2O = GDP + phosphate + H(+). GTP hydrolase that promotes the GTP-dependent binding of aminoacyl-tRNA to the A-site of ribosomes during protein biosynthesis. The polypeptide is Elongation factor Tu (Bacillus subtilis (strain 168)).